We begin with the raw amino-acid sequence, 56 residues long: Large ribosomal subunit protein bL33c (56 aa).

This sequence belongs to the bacterial ribosomal protein bL33 family.

The protein resides in the plastid. The protein localises to the chloroplast. This Rhodomonas salina (Cryptomonas salina) protein is Large ribosomal subunit protein bL33c.